The chain runs to 495 residues: NADH-ubiquinone oxidoreductase chain 4 (495 aa).

The next 11 helical transmembrane spans lie at 9-29, 39-59, 89-109, 139-159, 173-193, 214-234, 272-292, 313-333, 335-355, 367-387, and 413-433; these read YSNL…PLFI, LIGL…RIQF, ISLF…SVGW, LLLF…IIGV, FFLY…LILF, IFLW…VPVH, FPEA…IAII, VAHM…GIGG, ILPM…VGVL, YGGL…FTLA, and LVAT…LWLY.

Belongs to the complex I subunit 4 family.

The protein localises to the mitochondrion membrane. The enzyme catalyses a ubiquinone + NADH + 5 H(+)(in) = a ubiquinol + NAD(+) + 4 H(+)(out). In terms of biological role, core subunit of the mitochondrial membrane respiratory chain NADH dehydrogenase (Complex I) that is believed to belong to the minimal assembly required for catalysis. Complex I functions in the transfer of electrons from NADH to the respiratory chain. The immediate electron acceptor for the enzyme is believed to be ubiquinone. The protein is NADH-ubiquinone oxidoreductase chain 4 (ND4) of Brassica campestris (Field mustard).